Here is a 181-residue protein sequence, read N- to C-terminus: Large ribosomal subunit protein uL5 (181 aa).

The protein belongs to the universal ribosomal protein uL5 family. Part of the 50S ribosomal subunit; contacts the 5S rRNA and probably tRNA. Forms a bridge to the 30S subunit in the 70S ribosome.

In terms of biological role, this is one of the proteins that bind and probably mediate the attachment of the 5S RNA into the large ribosomal subunit, where it forms part of the central protuberance. In the 70S ribosome it contacts protein S13 of the 30S subunit (bridge B1b), connecting the 2 subunits; this bridge is implicated in subunit movement. May contact the P site tRNA; the 5S rRNA and some of its associated proteins might help stabilize positioning of ribosome-bound tRNAs. The protein is Large ribosomal subunit protein uL5 of Methanococcus maripaludis (strain C7 / ATCC BAA-1331).